A 92-amino-acid polypeptide reads, in one-letter code: Putative septation protein SpoVG (92 aa).

The protein belongs to the SpoVG family.

Its function is as follows. Could be involved in septation. The protein is Putative septation protein SpoVG of Clostridium botulinum (strain Eklund 17B / Type B).